The following is a 225-amino-acid chain: uncharacterized protein (225 aa).

A divalent metal cation-binding residues include glutamate 69, glutamate 71, and aspartate 100.

It belongs to the FAH family.

This is an uncharacterized protein from Pyrococcus abyssi (strain GE5 / Orsay).